Reading from the N-terminus, the 239-residue chain is Ribonuclease HII (239 aa).

Residues 30–221 (GPVAGVDEVG…VRRVATRSNG (192 aa)) form the RNase H type-2 domain. Positions 36, 37, and 130 each coordinate a divalent metal cation. Residues 217 to 239 (TRSNGAATAEREADPPQERDGTG) are disordered. The segment covering 225-239 (AEREADPPQERDGTG) has biased composition (basic and acidic residues).

The protein belongs to the RNase HII family. Mn(2+) serves as cofactor. Requires Mg(2+) as cofactor.

The protein resides in the cytoplasm. The enzyme catalyses Endonucleolytic cleavage to 5'-phosphomonoester.. Endonuclease that specifically degrades the RNA of RNA-DNA hybrids. The sequence is that of Ribonuclease HII from Mycobacterium ulcerans (strain Agy99).